Reading from the N-terminus, the 325-residue chain is tRNA U34 carboxymethyltransferase (325 aa).

Carboxy-S-adenosyl-L-methionine-binding positions include Lys-91, Trp-105, Lys-110, Gly-130, 152–154 (DPS), Met-196, Tyr-200, and Arg-315.

This sequence belongs to the class I-like SAM-binding methyltransferase superfamily. CmoB family. In terms of assembly, homotetramer.

It catalyses the reaction carboxy-S-adenosyl-L-methionine + 5-hydroxyuridine(34) in tRNA = 5-carboxymethoxyuridine(34) in tRNA + S-adenosyl-L-homocysteine + H(+). Functionally, catalyzes carboxymethyl transfer from carboxy-S-adenosyl-L-methionine (Cx-SAM) to 5-hydroxyuridine (ho5U) to form 5-carboxymethoxyuridine (cmo5U) at position 34 in tRNAs. This chain is tRNA U34 carboxymethyltransferase, found in Aeromonas salmonicida (strain A449).